Here is a 682-residue protein sequence, read N- to C-terminus: E3 ubiquitin-protein ligase RNF103 (682 aa).

The next 4 helical transmembrane spans lie at 6-26 (FFLLLYFLVLFVLARFFEAIV), 326-346 (LFVLSLVLVNLMAWMDLFITQ), 366-386 (LLIISWLPVLGFLQLPYLDSF), and 411-431 (MFYSSHPALFLSTYLGHGLLI). Residues 525-542 (EEMSESSQDTENDSDSDN) are compositionally biased toward acidic residues. The interval 525 to 549 (EEMSESSQDTENDSDSDNTDTFSSS) is disordered. Residues 618–660 (CVVCLENFENGCLLMGLPCGHVFHQNCIVMWLAGGRHCCPVCR) form an RING-type zinc finger.

In terms of assembly, interacts with DERL1 and VCP. As to expression, expressed in different tissues including hippocampus, cerebral cortex, heart, kidney, spleen and lung. Expression is increased in hippocampus and frontal cortex after chronic treatment with antidepressants.

Its subcellular location is the endoplasmic reticulum membrane. The enzyme catalyses S-ubiquitinyl-[E2 ubiquitin-conjugating enzyme]-L-cysteine + [acceptor protein]-L-lysine = [E2 ubiquitin-conjugating enzyme]-L-cysteine + N(6)-ubiquitinyl-[acceptor protein]-L-lysine.. Its pathway is protein modification; protein ubiquitination. In terms of biological role, acts as an E2-dependent E3 ubiquitin-protein ligase, probably involved in the ER-associated protein degradation pathway. This Rattus norvegicus (Rat) protein is E3 ubiquitin-protein ligase RNF103 (Rnf103).